Here is a 440-residue protein sequence, read N- to C-terminus: Ribulose bisphosphate carboxylase large chain (440 aa).

K3 is modified (N6,N6,N6-trimethyllysine). The substrate site is built by N112 and T162. K164 acts as the Proton acceptor in catalysis. A substrate-binding site is contributed by K166. The Mg(2+) site is built by K190, D192, and E193. K190 bears the N6-carboxylysine mark. Residue H283 is the Proton acceptor of the active site. R284, H316, and S368 together coordinate substrate.

The protein belongs to the RuBisCO large chain family. Type I subfamily. In terms of assembly, heterohexadecamer of 8 large chains and 8 small chains; disulfide-linked. The disulfide link is formed within the large subunit homodimers. Mg(2+) serves as cofactor. The disulfide bond which can form in the large chain dimeric partners within the hexadecamer appears to be associated with oxidative stress and protein turnover.

Its subcellular location is the plastid. It is found in the chloroplast. The catalysed reaction is 2 (2R)-3-phosphoglycerate + 2 H(+) = D-ribulose 1,5-bisphosphate + CO2 + H2O. It catalyses the reaction D-ribulose 1,5-bisphosphate + O2 = 2-phosphoglycolate + (2R)-3-phosphoglycerate + 2 H(+). Functionally, ruBisCO catalyzes two reactions: the carboxylation of D-ribulose 1,5-bisphosphate, the primary event in carbon dioxide fixation, as well as the oxidative fragmentation of the pentose substrate in the photorespiration process. Both reactions occur simultaneously and in competition at the same active site. The sequence is that of Ribulose bisphosphate carboxylase large chain from Bambusa multiplex (Hedge bamboo).